The sequence spans 953 residues: Xylosyltransferase 1 (953 aa).

Residues 1 to 17 lie on the Cytoplasmic side of the membrane; that stretch reads MVAAPCARRLARRSHSA. A helical; Signal-anchor for type II membrane protein membrane pass occupies residues 18 to 38; the sequence is LLAALMVLLLHTLVVWNFSSL. At 39 to 953 the chain is on the lumenal side; sequence DSGAGEQRRA…GAVKPDGRLR (915 aa). Over residues 48–62 the composition is skewed to low complexity; sequence AGAAAGAAEQQQPAA. Disordered stretches follow at residues 48–67 and 74–251; these read AGAAAGAAEQQQPAAPRRER and LPAA…APKC. The span at 79-97 shows a compositional bias: gly residues; that stretch reads GGPGGRAGGGGARGGGPGG. Positions 138–154 are enriched in basic and acidic residues; sequence KVRTDSNNENSVPKDFE. Residues 156-165 show a composition bias toward polar residues; that stretch reads VDNSNFAPRT. 2 stretches are compositionally biased toward basic and acidic residues: residues 170–197 and 205–216; these read HQPELAKKPPSRQKEHLQRKLDALDKRQ and GPKEVLPPREKA. Residue Asn219 is glycosylated (N-linked (GlcNAc...) asparagine). Disulfide bonds link Cys251–Cys279, Cys295–Cys536, Cys555–Cys568, and Cys557–Cys566. Residues Val327, Asp355, and 384–386 contribute to the UDP-alpha-D-xylose site; that span reads TIW. An N-linked (GlcNAc...) asparagine glycan is attached at Asn415. 488 to 489 serves as a coordination point for UDP-alpha-D-xylose; that stretch reads DW. UDP-alpha-D-xylose-binding positions include Ser569 and 592-593; that span reads RK. 2 disulfides stabilise this stretch: Cys669/Cys921 and Cys914/Cys927. The N-linked (GlcNAc...) asparagine glycan is linked to Asn771. The disordered stretch occupies residues 933–953; sequence SSFSPDPKSELGAVKPDGRLR.

The protein belongs to the glycosyltransferase 14 family. XylT subfamily. In terms of assembly, monomer. The cofactor is a divalent metal cation. Contains 7 disulfide bonds. In terms of processing, N-glycosylated. In terms of tissue distribution, detected in brain, spleen, kidney and testis, and at low levels in skeletal muscle.

It is found in the golgi apparatus membrane. The enzyme catalyses UDP-alpha-D-xylose + L-seryl-[protein] = 3-O-(beta-D-xylosyl)-L-seryl-[protein] + UDP + H(+). It participates in glycan metabolism; chondroitin sulfate biosynthesis. Its pathway is glycan metabolism; heparan sulfate biosynthesis. Its function is as follows. Catalyzes the first step in the biosynthesis of chondroitin sulfate and dermatan sulfate proteoglycans, such as DCN. Transfers D-xylose from UDP-D-xylose to specific serine residues of the core protein. Required for normal maturation of chondrocytes during bone development, normal onset of ossification and normal embryonic and postnatal skeleton development, especially of the long bones. This is Xylosyltransferase 1 (Xylt1) from Mus musculus (Mouse).